We begin with the raw amino-acid sequence, 450 residues long: Bifunctional protein GlmU (450 aa).

Residues 1-229 form a pyrophosphorylase region; the sequence is MRRHAIILAA…VEEIMGVNDR (229 aa). Residues 8 to 11, Lys-22, Gln-72, and 77 to 78 contribute to the UDP-N-acetyl-alpha-D-glucosamine site; these read LAAG and GT. Asp-102 contacts Mg(2+). UDP-N-acetyl-alpha-D-glucosamine is bound by residues Gly-139, Glu-154, and Asn-227. Asn-227 provides a ligand contact to Mg(2+). The tract at residues 230-250 is linker; it reads VMLSQAEKAMQRRTNHYHMLN. Positions 251 to 450 are N-acetyltransferase; it reads GVTIIDPDST…RQTTKEGYRK (200 aa). UDP-N-acetyl-alpha-D-glucosamine contacts are provided by Arg-332 and Lys-350. The active-site Proton acceptor is His-362. UDP-N-acetyl-alpha-D-glucosamine-binding residues include Tyr-365 and Asn-376. Acetyl-CoA-binding positions include 385 to 386, Ala-422, and Arg-439; that span reads NY.

The protein in the N-terminal section; belongs to the N-acetylglucosamine-1-phosphate uridyltransferase family. In the C-terminal section; belongs to the transferase hexapeptide repeat family. Homotrimer. Requires Mg(2+) as cofactor.

It is found in the cytoplasm. It catalyses the reaction alpha-D-glucosamine 1-phosphate + acetyl-CoA = N-acetyl-alpha-D-glucosamine 1-phosphate + CoA + H(+). The catalysed reaction is N-acetyl-alpha-D-glucosamine 1-phosphate + UTP + H(+) = UDP-N-acetyl-alpha-D-glucosamine + diphosphate. Its pathway is nucleotide-sugar biosynthesis; UDP-N-acetyl-alpha-D-glucosamine biosynthesis; N-acetyl-alpha-D-glucosamine 1-phosphate from alpha-D-glucosamine 6-phosphate (route II): step 2/2. It participates in nucleotide-sugar biosynthesis; UDP-N-acetyl-alpha-D-glucosamine biosynthesis; UDP-N-acetyl-alpha-D-glucosamine from N-acetyl-alpha-D-glucosamine 1-phosphate: step 1/1. The protein operates within bacterial outer membrane biogenesis; LPS lipid A biosynthesis. In terms of biological role, catalyzes the last two sequential reactions in the de novo biosynthetic pathway for UDP-N-acetylglucosamine (UDP-GlcNAc). The C-terminal domain catalyzes the transfer of acetyl group from acetyl coenzyme A to glucosamine-1-phosphate (GlcN-1-P) to produce N-acetylglucosamine-1-phosphate (GlcNAc-1-P), which is converted into UDP-GlcNAc by the transfer of uridine 5-monophosphate (from uridine 5-triphosphate), a reaction catalyzed by the N-terminal domain. The polypeptide is Bifunctional protein GlmU (Staphylococcus aureus (strain NCTC 8325 / PS 47)).